Consider the following 293-residue polypeptide: Ethanolamine ammonia-lyase small subunit (293 aa).

Adenosylcob(III)alamin-binding residues include Val-207 and Glu-228.

It belongs to the EutC family. In terms of assembly, the basic unit is a heterodimer which dimerizes to form tetramers. The heterotetramers trimerize; 6 large subunits form a core ring with 6 small subunits projecting outwards. Adenosylcob(III)alamin is required as a cofactor.

Its subcellular location is the bacterial microcompartment. The enzyme catalyses ethanolamine = acetaldehyde + NH4(+). Its pathway is amine and polyamine degradation; ethanolamine degradation. Functionally, catalyzes the deamination of various vicinal amino-alcohols to oxo compounds. Allows this organism to utilize ethanolamine as the sole source of nitrogen and carbon in the presence of external vitamin B12. This chain is Ethanolamine ammonia-lyase small subunit, found in Listeria monocytogenes serotype 4b (strain CLIP80459).